The primary structure comprises 611 residues: Pyrichalasin H cluster regulator pyiR (611 aa).

The zn(2)-C6 fungal-type DNA-binding region spans 11–47 (CDRCRGHKLRCIRLDPGPNDTGALLPCKRCVKAGAEC). Disordered regions lie at residues 53 to 128 (LSVK…LPPW), 169 to 192 (ALAA…DGTT), 265 to 291 (GGAG…GRSS), 401 to 427 (AHEG…AAPQ), 521 to 550 (RGGL…SDER), and 564 to 593 (SWFT…RTVE). The segment covering 59–69 (GDGHHSAHRAT) has biased composition (basic and acidic residues). The span at 98-109 (PTQPAPQRQTQR) shows a compositional bias: low complexity. Residues 265–279 (GGAGSQSLRDQQMQQ) show a composition bias toward polar residues. Positions 572-587 (GGSGGSGPGEGTGDSN) are enriched in gly residues.

The protein localises to the nucleus. Functionally, transcription factor that specifically regulates the expression of the gene cluster that mediates the biosynthesis of the mycotoxin pyrichalasin H, a tyrosine-derived cytochalasan that inhibits the growth of rice seedlings, but also inhibits lymphocyte capping and actin polymerization and alters cell morphology. Pyrichalasin H is indicated as the responsible agent for the genus-specific pathogenicity of M.grisea toward crabgrass. The chain is Pyrichalasin H cluster regulator pyiR from Pyricularia grisea (Crabgrass-specific blast fungus).